A 677-amino-acid polypeptide reads, in one-letter code: MAKVNITRDLIRRQIKERGALSFERRYHVTDPFIRRLGLEAELQGHSGCVNCLEWNEKGDLLASGSDDQHTIVWDPLHHKKLLSMHTGHTANIFSVKFLPHAGDRILITGAADSKVHVHDLTVKETIHMFGDHTNRVKRIATAPMWPNTFWSAAEDGLIRQYDLRENSKHSEVLIDLTEYCGQLVEAKCLTVNPQDNNCLAVGASGPFVRLYDIRMIHNHRKSMKQSPSAGVHTFCDRQKPLPDGAAQYYVAGHLPVKLPDYNNRLRVLVATYVTFSPNGTELLVNMGGEQVYLFDLTYKQRPYTFLLPRKCHSSGEVQNGKMSTNGVSNGVSNGLHLHSNGFRLPESRGHVSPQVELPPYLERVKQQANEAFACQQWTQAIQLYSKAVQRAPHNAMLYGNRAAAYMKRKWDGDHYDALRDCLKAISLNPCHLKAHFRLARCLFELKYVAEALECLDDFKGKFPEQAHSSACDALGRDITAALFSKNDGEEKKGPGGGAPVRLRSTSRKDSISEDEMVLRERSYDYQFRYCGHCNTTTDIKEANFFGSNAQYIVSGSDDGSFFIWEKETTNLVRVLQGDESIVNCLQPHPSYCFLATSGIDPVVRLWNPRPESEDLTGRVVEDMEGASQANQRRMNADPLEVMLLNMGYRITGLSSGGAGASDDEDSSEGQVQCRPS.

5 WD repeats span residues 45–84, 88–129, 132–172, 182–222, and 265–305; these read GHSG…KLLS, GHTA…TIHM, DHTN…KHSE, GQLV…NHRK, and RLRV…RPYT. The residue at position 353 (Ser-353) is a Phosphoserine. TPR repeat units follow at residues 362–395 and 397–432; these read LERV…APHN and MLYG…NPCH. The segment at 487–509 is disordered; that stretch reads NDGEEKKGPGGGAPVRLRSTSRK. Ser-511 carries the post-translational modification Phosphoserine. WD repeat units lie at residues 535-575 and 578-617; these read NTTT…LVRV and GDES…EDLT. Positions 655-677 are disordered; it reads SSGGAGASDDEDSSEGQVQCRPS.

It functions in the pathway protein modification; protein ubiquitination. May function as a substrate receptor for CUL4-DDB1 E3 ubiquitin-protein ligase complex. The sequence is that of WD and tetratricopeptide repeats protein 1 (WDTC1) from Homo sapiens (Human).